A 453-amino-acid chain; its full sequence is Na(+)/H(+) antiporter NhaA 2 (453 aa).

The next 12 helical transmembrane spans lie at 23–43 (FLHI…AALI), 74–94 (LHFW…GMEI), 111–131 (LPMA…LSFG), 139–159 (GWAV…ALLG), 168–188 (VFLL…IAFF), 191–211 (GGLD…VIGL), 214–234 (IGVG…LGIL), 235–255 (LTGA…PVTA), 316–336 (VAFG…LSGV), 345–365 (WVMI…IVSV), 386–406 (IMLV…IANL), and 419–439 (LGVL…GVWS).

This sequence belongs to the NhaA Na(+)/H(+) (TC 2.A.33) antiporter family.

The protein localises to the cell inner membrane. The catalysed reaction is Na(+)(in) + 2 H(+)(out) = Na(+)(out) + 2 H(+)(in). Functionally, na(+)/H(+) antiporter that extrudes sodium in exchange for external protons. In Pseudomonas putida (strain ATCC 47054 / DSM 6125 / CFBP 8728 / NCIMB 11950 / KT2440), this protein is Na(+)/H(+) antiporter NhaA 2.